Consider the following 514-residue polypeptide: 1-pyrroline-5-carboxylate dehydrogenase (514 aa).

Active-site residues include glutamate 286 and cysteine 320.

The protein belongs to the aldehyde dehydrogenase family. RocA subfamily.

It catalyses the reaction L-glutamate 5-semialdehyde + NAD(+) + H2O = L-glutamate + NADH + 2 H(+). It participates in amino-acid degradation; L-proline degradation into L-glutamate; L-glutamate from L-proline: step 2/2. This chain is 1-pyrroline-5-carboxylate dehydrogenase, found in Staphylococcus aureus (strain MW2).